Here is a 467-residue protein sequence, read N- to C-terminus: Neutral protease 2 homolog NFIA_031120 (467 aa).

The first 19 residues, 1–19, serve as a signal peptide directing secretion; sequence MKITALASAILAVVHGALA. The propeptide occupies 20-172; the sequence is LPARAPALDI…PASIKPLDRR (153 aa). 2 cysteine pairs are disulfide-bonded: Cys-179–Cys-251 and Cys-258–Cys-276. His-300 contacts Zn(2+). Residue Glu-301 is part of the active site. 2 residues coordinate Zn(2+): His-304 and Asp-315. Residues 359–451 are compositionally biased toward polar residues; sequence WDGNSQPGQT…TMWDGSSEPG (93 aa). A disordered region spans residues 359-467; sequence WDGNSQPGQT…HTTWGNFYQA (109 aa).

Belongs to the peptidase M35 family. Zn(2+) is required as a cofactor.

Its subcellular location is the secreted. The catalysed reaction is Preferential cleavage of bonds with hydrophobic residues in P1'. Also 3-Asn-|-Gln-4 and 8-Gly-|-Ser-9 bonds in insulin B chain.. Secreted metalloproteinase that allows assimilation of proteinaceous substrates. Shows high activities on basic nuclear substrates such as histone and protamine. This chain is Neutral protease 2 homolog NFIA_031120, found in Neosartorya fischeri (strain ATCC 1020 / DSM 3700 / CBS 544.65 / FGSC A1164 / JCM 1740 / NRRL 181 / WB 181) (Aspergillus fischerianus).